Reading from the N-terminus, the 965-residue chain is Sarcosine oxidase subunit alpha (965 aa).

9 residues coordinate NAD(+): Ala139, Asp158, Glu159, Arg160, Thr166, Val205, Ala418, Leu423, and Thr425. (6R)-5,10-methylene-5,6,7,8-tetrahydrofolate contacts are provided by Thr692 and Glu784.

The protein belongs to the GcvT family. In terms of assembly, heterotetramer composed of subunits alpha (SoxA), beta (SoxB), gamma (SoxG) and delta (SoxD). NAD(+) is required as a cofactor.

The protein localises to the cytoplasm. The catalysed reaction is sarcosine + (6S)-5,6,7,8-tetrahydrofolate + O2 = (6R)-5,10-methylene-5,6,7,8-tetrahydrofolate + glycine + H2O2. It carries out the reaction sarcosine + O2 + H2O = formaldehyde + glycine + H2O2. Its activity is regulated as follows. Inhibited by Zn(2+), Cu(2+), Cd(2+), Hg(2+), Ag(+), p-chloromercuribenzoate (p-CMB), iodoacetamide, N-ethylmaleimide, CN(-), o-phenanthroline and sodium lauryl sulfate. Functionally, in the presence of tetrahydrofolate, catalyzes the oxidative demethylation of sarcosine to yield glycine, 5,10-methylenetetrahydrofolate and hydrogen peroxide. In the absence of tetrahydrofolate, catalyzes the oxidative demethylation of sarcosine to yield glycine, formaldehyde and hydrogen peroxide. Can also use N-methyl-L-alanine and N-ethyl-L-glycine. Is very specific for oxygen as an acceptor. This is Sarcosine oxidase subunit alpha from Corynebacterium sp. (strain U-96).